A 201-amino-acid chain; its full sequence is MASRSAGTLLTEFNAAYVPPGLMPGYKGHVPGVAFSFGSPYGTTTLKYFQDQRNAALGRSSTAFSRGGHFPTIFSLNPTQVLRNRALTRDRWLHTPSYTRFNLDSSRWAELLHFYQMAQRHREHYQDKTGLVHRVPYFVLPVKEWDRYPIPTDLPPLSPKEKWHLLRVAPENLRTYQTFPSGKRVSPQERQRRDCYFEFRA.

It belongs to the CIMIP2 family. Microtubule inner protein component of sperm flagellar doublet microtubules.

Its subcellular location is the cytoplasm. The protein localises to the cytoskeleton. It is found in the cilium axoneme. It localises to the flagellum axoneme. Microtubule inner protein (MIP) part of the dynein-decorated doublet microtubules (DMTs) in cilia axoneme, which is required for motile cilia beating. Binds to the intra-tubulin interfaces. This Bos taurus (Bovine) protein is Ciliary microtubule inner protein 2C (CIMIP2C).